We begin with the raw amino-acid sequence, 517 residues long: 2-isopropylmalate synthase (517 aa).

Residues 6-267 (IIVFDTTLRD…YTTINTPEIY (262 aa)) form the Pyruvate carboxyltransferase domain. Positions 15, 201, 203, and 237 each coordinate Mn(2+). The tract at residues 393–517 (DLIGLQISDC…RLSKSSEHQV (125 aa)) is regulatory domain.

Belongs to the alpha-IPM synthase/homocitrate synthase family. LeuA type 1 subfamily. In terms of assembly, homodimer. It depends on Mn(2+) as a cofactor.

Its subcellular location is the cytoplasm. It catalyses the reaction 3-methyl-2-oxobutanoate + acetyl-CoA + H2O = (2S)-2-isopropylmalate + CoA + H(+). Its pathway is amino-acid biosynthesis; L-leucine biosynthesis; L-leucine from 3-methyl-2-oxobutanoate: step 1/4. In terms of biological role, catalyzes the condensation of the acetyl group of acetyl-CoA with 3-methyl-2-oxobutanoate (2-ketoisovalerate) to form 3-carboxy-3-hydroxy-4-methylpentanoate (2-isopropylmalate). In Aliarcobacter butzleri (strain RM4018) (Arcobacter butzleri), this protein is 2-isopropylmalate synthase.